The chain runs to 442 residues: MAAQAPTEALKELQVGEAATTNGKEAPDGNAGRQRQRRLGGRGRCGPRCSPAVRVPLRRRRRRRRTRKKKKAPTAQSDPPRVLMSQLFPQKNYPVGEECEYLNENAYRTTDEEKRHLDNLNSDFLTDYREAAEIHRQVRQWAQKNIKPGQGLTEIAEGIEDGVRALTGHWGLEEGDALKGGMGFPTGLSINHCAAHYTPNLGNKMVLQQEDVMKVDFGVHVNGRIVDSAFTLAFEPKYDNLLTAVREATNAGVKEAGIDVRVGDIGGVIQEVMESYEVEIDGTTYPVKSIRNLNGHTIERWSIHGAKSVPIVKSNDTTKMEEGDVFAVETFGSTGNGYVRDDMEVSHYAKRGDSNVPLRLDSAKRLLNVINKNFGTLPFCRRYLDRLGQEKYLLGLNNLVSAGIVEAYPPLVDKKGSYTAQFEHTILIRPTVKEVISRGEDY.

The interval methionine 1–arginine 81 is disordered. Basic residues predominate over residues proline 56–alanine 72. Histidine 196 is a binding site for substrate. The a divalent metal cation site is built by aspartate 216, aspartate 227, and histidine 296. Histidine 304 is a binding site for substrate. The a divalent metal cation site is built by glutamate 329 and glutamate 423.

It belongs to the peptidase M24A family. Methionine aminopeptidase eukaryotic type 2 subfamily. Requires Co(2+) as cofactor. It depends on Zn(2+) as a cofactor. Mn(2+) is required as a cofactor. Fe(2+) serves as cofactor.

The protein resides in the cytoplasm. The enzyme catalyses Release of N-terminal amino acids, preferentially methionine, from peptides and arylamides.. Cotranslationally removes the N-terminal methionine from nascent proteins. The N-terminal methionine is often cleaved when the second residue in the primary sequence is small and uncharged (Met-Ala-, Cys, Gly, Pro, Ser, Thr, or Val). In Verticillium alfalfae (strain VaMs.102 / ATCC MYA-4576 / FGSC 10136) (Verticillium wilt of alfalfa), this protein is Methionine aminopeptidase 2.